The chain runs to 360 residues: Putative agmatine deiminase (360 aa).

Residue Cys353 is the Amidino-cysteine intermediate of the active site.

Belongs to the agmatine deiminase family.

It catalyses the reaction agmatine + H2O = N-carbamoylputrescine + NH4(+). The protein is Putative agmatine deiminase of Vibrio parahaemolyticus serotype O3:K6 (strain RIMD 2210633).